We begin with the raw amino-acid sequence, 688 residues long: Protein sel-1 homolog 2 (688 aa).

Residues 1-23 form the signal peptide; that stretch reads MKPLSLLIEILIILGVTIKTIKA. The Extracellular segment spans residues 24–662; the sequence is EEHNKRQKER…RWNWLKLDNT (639 aa). Asn-34 carries an N-linked (GlcNAc...) asparagine glycan. Sel1-like repeat units follow at residues 107–142, 143–178, 179–214, 215–250, 297–333, 334–370, 371–406, 407–442, 443–478, 551–586, and 588–623; these read GDQL…DMGN, LKAM…KEGS, CKAQ…AGGN, MMSQ…DYIA, VQIQ…KAGS, ANAM…SKGN, AIGL…EKGW, PDAQ…QSGQ, PLAI…ELGH, AFAR…NKYH, and AQAM…QTSP. The chain crosses the membrane as a helical span at residues 663–683; sequence IGPHWDLFVIGLIVPGLILLL. At 684 to 688 the chain is on the cytoplasmic side; the sequence is RNHHG.

The protein belongs to the sel-1 family.

The protein resides in the membrane. Its subcellular location is the cell projection. The protein localises to the cilium. It localises to the nucleus speckle. In Homo sapiens (Human), this protein is Protein sel-1 homolog 2 (SEL1L2).